Reading from the N-terminus, the 177-residue chain is Isopentenyl-diphosphate Delta-isomerase 2 (177 aa).

Mn(2+)-binding residues include histidine 24 and histidine 30. Positions 28 to 160 constitute a Nudix hydrolase domain; that stretch reads MLHRAFSIFV…PDVYTVWFKK (133 aa). Cysteine 65 is an active-site residue. Cysteine 65 is a Mg(2+) binding site. Histidine 67 provides a ligand contact to Mn(2+). Glutamate 85 provides a ligand contact to Mg(2+). Mn(2+) contacts are provided by glutamate 110 and glutamate 112. The active site involves glutamate 112.

The protein belongs to the IPP isomerase type 1 family. In terms of assembly, homodimer. Requires Mg(2+) as cofactor. Mn(2+) serves as cofactor.

It localises to the cytoplasm. The catalysed reaction is isopentenyl diphosphate = dimethylallyl diphosphate. It functions in the pathway isoprenoid biosynthesis; dimethylallyl diphosphate biosynthesis; dimethylallyl diphosphate from isopentenyl diphosphate: step 1/1. Catalyzes the 1,3-allylic rearrangement of the homoallylic substrate isopentenyl (IPP) to its highly electrophilic allylic isomer, dimethylallyl diphosphate (DMAPP). In Photorhabdus laumondii subsp. laumondii (strain DSM 15139 / CIP 105565 / TT01) (Photorhabdus luminescens subsp. laumondii), this protein is Isopentenyl-diphosphate Delta-isomerase 2.